We begin with the raw amino-acid sequence, 422 residues long: Biofilm regulator 1 (422 aa).

Composition is skewed to low complexity over residues Met-1–Ala-19 and Ser-36–Ser-45. Disordered stretches follow at residues Met-1–Pro-86 and Arg-116–Pro-207. The span at Ala-46–Ile-61 shows a compositional bias: polar residues. Low complexity-rich tracts occupy residues Thr-69–Pro-81 and Pro-120–Val-143. Positions Val-146–Ala-159 are enriched in polar residues. A compositionally biased stretch (low complexity) spans Ser-160–Pro-194. A compositionally biased stretch (polar residues) spans Thr-195–Ser-205. The GATA-type zinc-finger motif lies at Cys-282 to Cys-307.

As to quaternary structure, interacts with HDA1.

Its subcellular location is the nucleus. Transcription factor required for hyphal growth, biofilm formation, and virulence. Promotes formation of both conventional and pheromone-stimulated biofilms. Binds and recruits HDA1 to promoters of hypha-specific genes in a rapamycin-dependent manner. Involved in the switch between two heritable states, the white and opaque states. These two cell types differ in many characteristics, including cell structure, mating competence, and virulence. Each state is heritable for many generations, and switching between states occurs stochastically at low frequency. This Candida albicans (strain SC5314 / ATCC MYA-2876) (Yeast) protein is Biofilm regulator 1 (BRG1).